A 161-amino-acid polypeptide reads, in one-letter code: Small ribosomal subunit protein uS9 (161 aa).

This sequence belongs to the universal ribosomal protein uS9 family.

This Bartonella henselae (strain ATCC 49882 / DSM 28221 / CCUG 30454 / Houston 1) (Rochalimaea henselae) protein is Small ribosomal subunit protein uS9.